The following is a 472-amino-acid chain: Trigger factor (472 aa).

Residues 174-261 (GDIAVLGFKG…LKDLKTRELP (88 aa)) form the PPIase FKBP-type domain. The interval 430–472 (ENSTLTEQAPAADDADDAEKPAAKKKPAAKKKTPAKSKTDAEA) is disordered. Residues 452–464 (AKKKPAAKKKTPA) show a composition bias toward basic residues.

Belongs to the FKBP-type PPIase family. Tig subfamily.

The protein localises to the cytoplasm. It catalyses the reaction [protein]-peptidylproline (omega=180) = [protein]-peptidylproline (omega=0). Its function is as follows. Involved in protein export. Acts as a chaperone by maintaining the newly synthesized protein in an open conformation. Functions as a peptidyl-prolyl cis-trans isomerase. The chain is Trigger factor from Parasynechococcus marenigrum (strain WH8102).